We begin with the raw amino-acid sequence, 147 residues long: Peptide methionine sulfoxide reductase MsrA (147 aa).

Cys-10 is an active-site residue.

Belongs to the MsrA Met sulfoxide reductase family.

It catalyses the reaction L-methionyl-[protein] + [thioredoxin]-disulfide + H2O = L-methionyl-(S)-S-oxide-[protein] + [thioredoxin]-dithiol. The enzyme catalyses [thioredoxin]-disulfide + L-methionine + H2O = L-methionine (S)-S-oxide + [thioredoxin]-dithiol. In terms of biological role, has an important function as a repair enzyme for proteins that have been inactivated by oxidation. Catalyzes the reversible oxidation-reduction of methionine sulfoxide in proteins to methionine. The chain is Peptide methionine sulfoxide reductase MsrA from Pelagibacter ubique (strain HTCC1062).